A 185-amino-acid polypeptide reads, in one-letter code: Ribosome-recycling factor (185 aa).

An N6-acetyllysine modification is found at K162.

Belongs to the RRF family.

It localises to the cytoplasm. In terms of biological role, responsible for the release of ribosomes from messenger RNA at the termination of protein biosynthesis. May increase the efficiency of translation by recycling ribosomes from one round of translation to another. The polypeptide is Ribosome-recycling factor (Shigella boydii serotype 18 (strain CDC 3083-94 / BS512)).